Reading from the N-terminus, the 390-residue chain is 2-deoxy-scyllo-inosose synthase (390 aa).

Residues Asp42, 73 to 76 (EQNK), 105 to 109 (GVTGN), 129 to 130 (TT), 140 to 142 (SLK), and 151 to 152 (KN) contribute to the NAD(+) site. Lys142 is an active-site residue. Glu184 contributes to the Co(2+) binding site. Glu244 is an active-site residue. Residues His247 and His263 each contribute to the Co(2+) site. The segment at 371–390 (PPRPAAARTDDAATVLGGAG) is disordered.

This sequence belongs to the sugar phosphate cyclases superfamily. DOI synthase family. Requires NAD(+) as cofactor. Co(2+) serves as cofactor.

The catalysed reaction is D-glucose 6-phosphate = 2-deoxy-L-scyllo-inosose + phosphate. It functions in the pathway metabolic intermediate biosynthesis; 2-deoxystreptamine biosynthesis; 2-deoxystreptamine from D-glucose 6-phosphate: step 1/4. The protein operates within antibiotic biosynthesis; kanamycin biosynthesis. Functionally, catalyzes the intramolecular carbocycle formation from D-glucose-6-phosphate to 2-deoxy-scyllo-inosose (DOI). This Streptomyces kanamyceticus protein is 2-deoxy-scyllo-inosose synthase (kanC).